We begin with the raw amino-acid sequence, 274 residues long: Penicillin-insensitive murein endopeptidase (274 aa).

The N-terminal stretch at 1–19 (MNKTAIALLALLASSASLA) is a signal peptide. Intrachain disulfides connect cysteine 44-cysteine 265, cysteine 187-cysteine 235, and cysteine 216-cysteine 223. Zn(2+) contacts are provided by histidine 110, histidine 113, aspartate 120, aspartate 147, histidine 150, and histidine 211. The segment at 227 to 274 (PLPPPGDGCGAELQSWFEPPKPGTTKPEKKTPPPLPPSCQALLDEHVI) is disordered.

The protein belongs to the peptidase M74 family. In terms of assembly, dimer. Zn(2+) is required as a cofactor.

It localises to the periplasm. Functionally, murein endopeptidase that cleaves the D-alanyl-meso-2,6-diamino-pimelyl amide bond that connects peptidoglycan strands. Likely plays a role in the removal of murein from the sacculus. This chain is Penicillin-insensitive murein endopeptidase, found in Escherichia coli (strain SE11).